The following is a 123-amino-acid chain: MPTNNQLVRCGRKSKIRASKSPALNGNPFAKGVCVLVKTITPRKPNSALRKMARVRFRNGTCVNAYIPGEGHNLQEHSTVLVRGGRVPDLPGVRYHIVRGVYDTQGVKNRKQGRSRYGTKRPK.

Asp-89 is modified (3-methylthioaspartic acid).

This sequence belongs to the universal ribosomal protein uS12 family. Part of the 30S ribosomal subunit. Contacts proteins S8 and S17. May interact with IF1 in the 30S initiation complex.

Its function is as follows. With S4 and S5 plays an important role in translational accuracy. Interacts with and stabilizes bases of the 16S rRNA that are involved in tRNA selection in the A site and with the mRNA backbone. Located at the interface of the 30S and 50S subunits, it traverses the body of the 30S subunit contacting proteins on the other side and probably holding the rRNA structure together. The combined cluster of proteins S8, S12 and S17 appears to hold together the shoulder and platform of the 30S subunit. The chain is Small ribosomal subunit protein uS12 from Orientia tsutsugamushi (strain Boryong) (Rickettsia tsutsugamushi).